Here is a 407-residue protein sequence, read N- to C-terminus: Imidazolonepropionase (407 aa).

Fe(3+) contacts are provided by His74 and His76. Residues His74 and His76 each contribute to the Zn(2+) site. 4-imidazolone-5-propanoate contacts are provided by Arg83, Tyr146, and His179. Tyr146 contributes to the N-formimidoyl-L-glutamate binding site. His244 contacts Fe(3+). His244 is a Zn(2+) binding site. A 4-imidazolone-5-propanoate-binding site is contributed by Gln247. Asp319 is a Fe(3+) binding site. Asp319 provides a ligand contact to Zn(2+). Residues Asn321 and Gly323 each coordinate N-formimidoyl-L-glutamate. 4-imidazolone-5-propanoate is bound at residue Thr324.

This sequence belongs to the metallo-dependent hydrolases superfamily. HutI family. The cofactor is Zn(2+). Requires Fe(3+) as cofactor.

The protein localises to the cytoplasm. The catalysed reaction is 4-imidazolone-5-propanoate + H2O = N-formimidoyl-L-glutamate. It functions in the pathway amino-acid degradation; L-histidine degradation into L-glutamate; N-formimidoyl-L-glutamate from L-histidine: step 3/3. Its function is as follows. Catalyzes the hydrolytic cleavage of the carbon-nitrogen bond in imidazolone-5-propanoate to yield N-formimidoyl-L-glutamate. It is the third step in the universal histidine degradation pathway. The sequence is that of Imidazolonepropionase from Salmonella paratyphi A (strain ATCC 9150 / SARB42).